The sequence spans 337 residues: 2-oxoglutarate receptor 1 (337 aa).

The Extracellular portion of the chain corresponds to 1 to 38 (MIEPLDSPASDSDFLDYPSALGNCTDEQISFKMQYLPV). Residue Asn23 is glycosylated (N-linked (GlcNAc...) asparagine). A helical transmembrane segment spans residues 39–59 (IYSIIFLVGFPGNTVAISIYI). Over 60–69 (FKMRPWRGST) the chain is Cytoplasmic. A helical transmembrane segment spans residues 70-90 (VIMLNLALTDLLYLTSLPFLI). Residues 91–116 (HYYASGENWIFGDFMCKFIRFGFHFN) are Extracellular-facing. Cys106 and Cys183 are joined by a disulfide. Residues 117–137 (LYSSILFLTCFSLFRYVVIIH) form a helical membrane-spanning segment. The Cytoplasmic portion of the chain corresponds to 138-151 (PMSCFSIQKTRWAV). Residues 152–172 (VACAGVWVISLVAVMPMTFLI) form a helical membrane-spanning segment. The Extracellular portion of the chain corresponds to 173-200 (TSTTRTNRSACLDLTSSDDLTTIKWYNL). Residues 201 to 221 (ILTATTFCLPLVIVTLCYTTI) form a helical membrane-spanning segment. Over 222-242 (ISTLTHGPRTHSCFKQKARRL) the chain is Cytoplasmic. The helical transmembrane segment at 243 to 263 (TILLLLVFYICFLPFHILRVI) threads the bilayer. The Extracellular segment spans residues 264-284 (RIESRLLSISCSIESHIHEAY). The helical transmembrane segment at 285 to 305 (IVSRPLAALNTFGNLLLYVVV) threads the bilayer. Over 306–337 (SNNFQQAFCSIVRCKASGDLEQGKKDSCSNNP) the chain is Cytoplasmic.

The protein belongs to the G-protein coupled receptor 1 family. Predominantly expressed in the kidney with limited expression in the testis and the smooth muscle. Expressed in SLC26A4/pendrin-positive type B and non-A non-B intercalated cells (at protein level).

Its subcellular location is the cell membrane. Functionally, g protein-coupled receptor for dicarboxylates and amino dicarboxylates. Receptor for itaconate produced by activated macrophages upon bacterial infection. In the respiratory epithelium, couples the binding of itaconate to the activation of GNA11 and downstream intracellular Ca(2+) release, leading to mucocilliary clearance of airborne pathogens. Receptor for leukotriene E4 (LTE4) produced by mast cells upon allergic inflammation. Binds with high affinity to LTE4 and elicits mucin release from pulmonary epithelium in response to airborne fungi allergens. Regulates mucin-producing goblet cell homeostasis. Receptor for alpha-ketoglutarate produced by proximal tubule renal cells upon metabolic alkalosis. In an intrarenal paracrine signaling pathway, binds alpha-ketoglutarate and drives transepithelial salt reabsorption and bicarbonate secretion by SLC26A4/pendrin-positive intercalated cells. This Mus musculus (Mouse) protein is 2-oxoglutarate receptor 1 (Oxgr1).